The primary structure comprises 138 residues: Diuretic hormone 1 (138 aa).

The first 19 residues, 1–19 (MMWWAIWCVMVVVSSAASA), serve as a signal peptide directing secretion. The propeptide occupies 20–78 (APAPDSAPMDLVQIDSAGPDDESLGYAVSSLEGRYGAEAPWLYLLAEMPRDSQIGRAAV). Residue I121 is modified to Isoleucine amide. A propeptide spanning residues 125 to 138 (GLQWSRSEQPSAYY) is cleaved from the precursor.

Belongs to the sauvagine/corticotropin-releasing factor/urotensin I family.

The protein resides in the secreted. Functionally, regulation of fluid secretion. The sequence is that of Diuretic hormone 1 from Manduca sexta (Tobacco hawkmoth).